The following is a 143-amino-acid chain: Large-conductance mechanosensitive channel (143 aa).

Helical transmembrane passes span 10-30 (FAVK…GAFG), 40-60 (VIMP…LFLV), and 86-106 (GSFI…FMMV).

The protein belongs to the MscL family. In terms of assembly, homopentamer.

Its subcellular location is the cell inner membrane. Its function is as follows. Channel that opens in response to stretch forces in the membrane lipid bilayer. May participate in the regulation of osmotic pressure changes within the cell. This chain is Large-conductance mechanosensitive channel, found in Paracidovorax citrulli (strain AAC00-1) (Acidovorax citrulli).